We begin with the raw amino-acid sequence, 392 residues long: Bifunctional enzyme Fae/Hps (392 aa).

The formaldehyde-activating enzyme stretch occupies residues 1-161 (MFQIGEALMG…EESNKSTHAI (161 aa)). The Proton donor role is filled by His17. Substrate-binding residues include Asp19, Leu48, Lys66, Thr68, and Gln83. Residues 162-392 (MGFKVTRLWD…IDQFRVMTDF (231 aa)) form a 3-hexulose-6-phosphate synthase region.

In the N-terminal section; belongs to the formaldehyde-activating enzyme family. This sequence in the C-terminal section; belongs to the HPS/KGPDC family. HPS subfamily.

It carries out the reaction 5,6,7,8-tetrahydromethanopterin + formaldehyde = 5,10-methylenetetrahydromethanopterin + H2O. The enzyme catalyses D-ribulose 5-phosphate + formaldehyde = D-arabino-hex-3-ulose 6-phosphate. It functions in the pathway carbohydrate biosynthesis; D-ribose 5-phosphate biosynthesis. In terms of biological role, catalyzes the condensation of formaldehyde with tetrahydromethanopterin (H(4)MPT) to 5,10-methylenetetrahydromethanopterin. Its function is as follows. Catalyzes the reversible formation of ribulose-5-phosphate and formaldehyde from 3-hexulose-6-phosphate. The protein is Bifunctional enzyme Fae/Hps of Methanosarcina mazei (strain ATCC BAA-159 / DSM 3647 / Goe1 / Go1 / JCM 11833 / OCM 88) (Methanosarcina frisia).